Here is a 286-residue protein sequence, read N- to C-terminus: Pantothenate synthetase (286 aa).

30 to 37 (MGNLHRGH) provides a ligand contact to ATP. Catalysis depends on His37, which acts as the Proton donor. A (R)-pantoate-binding site is contributed by Gln61. A beta-alanine-binding site is contributed by Gln61. Position 149-152 (149-152 (GEKD)) interacts with ATP. Gln155 provides a ligand contact to (R)-pantoate. ATP contacts are provided by residues Val178 and 186–189 (LSSR).

It belongs to the pantothenate synthetase family. Homodimer.

Its subcellular location is the cytoplasm. The enzyme catalyses (R)-pantoate + beta-alanine + ATP = (R)-pantothenate + AMP + diphosphate + H(+). Its pathway is cofactor biosynthesis; (R)-pantothenate biosynthesis; (R)-pantothenate from (R)-pantoate and beta-alanine: step 1/1. Functionally, catalyzes the condensation of pantoate with beta-alanine in an ATP-dependent reaction via a pantoyl-adenylate intermediate. The chain is Pantothenate synthetase from Nitrosococcus oceani (strain ATCC 19707 / BCRC 17464 / JCM 30415 / NCIMB 11848 / C-107).